Reading from the N-terminus, the 251-residue chain is Probable transcriptional regulatory protein Arth_2304 (251 aa).

This sequence belongs to the TACO1 family.

It is found in the cytoplasm. The chain is Probable transcriptional regulatory protein Arth_2304 from Arthrobacter sp. (strain FB24).